Here is a 192-residue protein sequence, read N- to C-terminus: Thymidylate kinase (192 aa).

An ATP-binding site is contributed by 7 to 14 (GIDCVGKS).

It belongs to the thymidylate kinase family.

The catalysed reaction is dTMP + ATP = dTDP + ADP. Its function is as follows. Phosphorylation of dTMP to form dTDP in both de novo and salvage pathways of dTTP synthesis. The polypeptide is Thymidylate kinase (Campylobacter jejuni subsp. jejuni serotype O:6 (strain 81116 / NCTC 11828)).